The sequence spans 417 residues: FK506-binding protein 3 (417 aa).

2 disordered regions span residues 42-129 (SLDD…LSPE) and 191-307 (EGCG…DKPK). Acidic residues-rich tracts occupy residues 61–84 (FDDE…EESE), 99–120 (SEEE…EFEE), and 197–222 (CACD…DASD). Composition is skewed to basic and acidic residues over residues 236–249 (ANEK…EPKA) and 256–307 (DQKD…DKPK). The PPIase FKBP-type domain maps to 331–417 (GARVGMRYIG…TFDVKLVSLK (87 aa)).

This sequence belongs to the FKBP-type PPIase family. FKBP3/4 subfamily.

Its subcellular location is the nucleus. The protein localises to the nucleolus. The enzyme catalyses [protein]-peptidylproline (omega=180) = [protein]-peptidylproline (omega=0). Its activity is regulated as follows. Inhibited by both FK506 and rapamycin. Its function is as follows. PPIases accelerate the folding of proteins. It catalyzes the cis-trans isomerization of proline imidic peptide bonds in oligopeptides. The polypeptide is FK506-binding protein 3 (FPR3) (Eremothecium gossypii (strain ATCC 10895 / CBS 109.51 / FGSC 9923 / NRRL Y-1056) (Yeast)).